Here is a 447-residue protein sequence, read N- to C-terminus: Retinoic acid receptor alpha (447 aa).

The interval 1-79 (MAGKGNPVPG…PPPPPRVYKP (79 aa)) is modulating. A compositionally biased stretch (polar residues) spans 47-61 (TPSPATIETQSTSSE). Residues 47-72 (TPSPATIETQSTSSEEIVPSPPSPPP) form a disordered region. NR C4-type zinc fingers lie at residues 80–100 (CFVCQDKSSGYHYGVSACEGC) and 116–140 (CHREKNCIINKVTRNRCQYCRLQKC). A DNA-binding region (nuclear receptor) is located at residues 80-145 (CFVCQDKSSG…RLQKCLEVGM (66 aa)). Residues 146–174 (SKESVRNDRNKKKKDEKKPECIENYVLSP) are hinge. Positions 175–409 (DTEQMINRVR…PLIQEMLENS (235 aa)) constitute an NR LBD domain. Positions 400–408 (PLIQEMLEN) match the 9aaTAD motif. Residues 407–447 (ENSEGLESGATGSRPSGAPPGSCSPSLSPSSAQSSPPTQSP) form a disordered region. Residues 414 to 447 (SGATGSRPSGAPPGSCSPSLSPSSAQSSPPTQSP) are compositionally biased toward low complexity.

Belongs to the nuclear hormone receptor family. NR1 subfamily. As to quaternary structure, heterodimer; with an rxr molecule. Binds DNA preferentially as a rar/rxr heterodimer.

The protein resides in the nucleus. In terms of biological role, receptor for retinoic acid. Retinoic acid receptors bind as heterodimers to their target response elements in response to their ligands, all-trans or 9-cis retinoic acid, and regulate gene expression in various biological processes. The rar/rxr heterodimers bind to the retinoic acid response elements (RARE) composed of tandem 5'-AGGTCA-3' sites known as DR1-DR5. The protein is Retinoic acid receptor alpha (rara) of Takifugu rubripes (Japanese pufferfish).